Here is a 260-residue protein sequence, read N- to C-terminus: Phytolongin Phyl2.1 (260 aa).

A Longin domain is found at 12–114 (CIAKGTVILA…LDNPTQHCLQ (103 aa)). The helical; Anchor for type IV membrane protein transmembrane segment at 231 to 251 (WIVLMFDLCICLVLFGIWLWI) threads the bilayer.

The protein belongs to the synaptobrevin family.

The protein localises to the membrane. Its function is as follows. Non-SNARE longin protein involved in membrane-trafficking machinery. The chain is Phytolongin Phyl2.1 from Arabidopsis thaliana (Mouse-ear cress).